The following is a 212-amino-acid chain: Uracil phosphoribosyltransferase (212 aa).

Residues arginine 78, arginine 103, and 130–138 (DPMLATGGS) contribute to the 5-phospho-alpha-D-ribose 1-diphosphate site. Uracil contacts are provided by residues isoleucine 193 and 198 to 200 (GDA). Aspartate 199 serves as a coordination point for 5-phospho-alpha-D-ribose 1-diphosphate.

Belongs to the UPRTase family. Mg(2+) serves as cofactor.

The enzyme catalyses UMP + diphosphate = 5-phospho-alpha-D-ribose 1-diphosphate + uracil. Its pathway is pyrimidine metabolism; UMP biosynthesis via salvage pathway; UMP from uracil: step 1/1. With respect to regulation, allosterically activated by GTP. In terms of biological role, catalyzes the conversion of uracil and 5-phospho-alpha-D-ribose 1-diphosphate (PRPP) to UMP and diphosphate. In Bordetella avium (strain 197N), this protein is Uracil phosphoribosyltransferase.